A 142-amino-acid polypeptide reads, in one-letter code: Hemoglobin subunit alpha (142 aa).

S1 carries the post-translational modification N-acetylserine. The 142-residue stretch at 1-142 (SLSDKDKAAV…LSLALAEKYR (142 aa)) folds into the Globin domain. Heme b-binding residues include H59 and H88.

The protein belongs to the globin family. In terms of assembly, heterotetramer of two alpha chains and two beta chains. Red blood cells.

In terms of biological role, involved in oxygen transport from gills to the various peripheral tissues. The polypeptide is Hemoglobin subunit alpha (Lycodes reticulatus (Arctic eelpout)).